We begin with the raw amino-acid sequence, 494 residues long: MPTESGSWAAARQTKQKRKSHSLSIKRTNSSEQDRPGLQREMLEGQDSKLPSSVRNTLLELFGQIEREFENLYLENLELRREIDTLNDRLAVEGQAIDGAELSKGQMKTKASHSTSQLSQKLKTTYKASTSKIVSSFKTTTSRAICQLVKDYVGHRDGLWDVSVTRTQPVVLGTASADHTALLWSIETGKCLIKYVGHAGSVNSIKFHPTEQIALTASGDQTAHIWRYMVQLPTPQPTADTSISGEEEVDFSDKDENDGDGDASSDCPTVRVPLTALKSHQGVVIAADWLVGGKQAVTASWDRTANLYDVETSELVHSLTGHDQELTHCCTHPTQRLVVTSSRDTTFRLWDFRDPSIHSVNVFQGHTDTVTSAVFTVGDNVVSGSDDRTVKVWDLKNMRSPIATIRTDSAINRISVSVGQRIIALPHDNRQVRLFDMSGVRLARLPRSNRQGHRRMVCCCAWSEDHPTCNLFTCGFDRQAIGWNINIPALLQEK.

A disordered region spans residues 1–38; sequence MPTESGSWAAARQTKQKRKSHSLSIKRTNSSEQDRPGL. Positions 22–31 are enriched in polar residues; sequence SLSIKRTNSS. WD repeat units follow at residues 154–194 and 197–236; these read GHRD…CLIK and GHAG…PTPQ. Residues 236–266 form a disordered region; sequence QPTADTSISGEEEVDFSDKDENDGDGDASSD. Acidic residues predominate over residues 245–263; sequence GEEEVDFSDKDENDGDGDA. WD repeat units follow at residues 279–318, 321–360, 365–403, 406–445, and 452–493; these read SHQG…LVHS, GHDQ…IHSV, GHTD…SPIA, RTDS…LARL, and GHRR…LLQE.

Its subcellular location is the cytoplasm. The protein localises to the nucleus. This Xenopus tropicalis (Western clawed frog) protein is WD repeat-containing protein 37 (wdr37).